The sequence spans 776 residues: Probable inorganic carbon transporter subunit DabA (776 aa).

Positions 313, 315, 473, and 488 each coordinate Zn(2+).

The protein belongs to the inorganic carbon transporter (TC 9.A.2) DabA family. In terms of assembly, forms a complex with DabB. The cofactor is Zn(2+).

The protein localises to the cell inner membrane. Its function is as follows. Part of an energy-coupled inorganic carbon pump. The polypeptide is Probable inorganic carbon transporter subunit DabA (Chromobacterium violaceum (strain ATCC 12472 / DSM 30191 / JCM 1249 / CCUG 213 / NBRC 12614 / NCIMB 9131 / NCTC 9757 / MK)).